A 267-amino-acid chain; its full sequence is Type III pantothenate kinase (267 aa).

6–13 (DVRNTHTT) lines the ATP pocket. A substrate-binding site is contributed by 109-112 (GADR). Aspartate 111 (proton acceptor) is an active-site residue. Residue aspartate 131 participates in K(+) binding. An ATP-binding site is contributed by serine 134. A substrate-binding site is contributed by threonine 186.

It belongs to the type III pantothenate kinase family. Homodimer. NH4(+) is required as a cofactor. It depends on K(+) as a cofactor.

The protein localises to the cytoplasm. It catalyses the reaction (R)-pantothenate + ATP = (R)-4'-phosphopantothenate + ADP + H(+). The protein operates within cofactor biosynthesis; coenzyme A biosynthesis; CoA from (R)-pantothenate: step 1/5. In terms of biological role, catalyzes the phosphorylation of pantothenate (Pan), the first step in CoA biosynthesis. This is Type III pantothenate kinase from Mycobacterium sp. (strain JLS).